A 470-amino-acid chain; its full sequence is MSKKYDAGVKEYRDTYWTPDYVPLDTDLLACFKCTGQEGVPKEEVAAAVAAESSTGTWSTVWSELLTDLDFYKGRCYRIEDVPGDKEAFYAFIAYPLDLFEEGSITNVLTSLVGNVFGFKALRHLRLEDIRFPIAFIKCCAGPPNGIAVERDRMNKYGRPLLGCTIKPKLGLSGKNYGRVVYECLRGGLDFTKDDENINSQPFQRWQNRFEFVAEAIKLAEQETGERKGHYLNVTANTPEEMYERAEFAKELNQPIIMHDFITGGFTANTGLSKWCRANGMLLHIHRAMHAVIDRHPKHGIHFRVLAKCLRLSGGDQLHTGTVVGKLEGDRQTTLGYIDQLRESFVPEDRSRGNFFDQDWGSMPGVFAVASGGIHVWHMPALVAIFGDDSVLQFGGGTHGHPWGSAAGAAANRVALEACVKARNAGREIEKESRDILMEAGKHSPELAIALETWKEIKFEFDTVDKLDVQ.

Positions 115 and 165 each coordinate substrate. The active-site Proton acceptor is Lys167. Lys169 is a substrate binding site. Lys193, Asp195, and Glu196 together coordinate Mg(2+). Lys193 carries the post-translational modification N6-carboxylysine. Residue His286 is the Proton acceptor of the active site. Positions 287, 319, and 371 each coordinate substrate.

It belongs to the RuBisCO large chain family. Type I subfamily. As to quaternary structure, heterohexadecamer of 8 large chains and 8 small chains. Mg(2+) serves as cofactor.

It is found in the carboxysome. It catalyses the reaction 2 (2R)-3-phosphoglycerate + 2 H(+) = D-ribulose 1,5-bisphosphate + CO2 + H2O. It carries out the reaction D-ribulose 1,5-bisphosphate + O2 = 2-phosphoglycolate + (2R)-3-phosphoglycerate + 2 H(+). Functionally, ruBisCO catalyzes two reactions: the carboxylation of D-ribulose 1,5-bisphosphate, the primary event in carbon dioxide fixation, as well as the oxidative fragmentation of the pentose substrate in the photorespiration process. Both reactions occur simultaneously and in competition at the same active site. In Synechococcus sp. (strain CC9902), this protein is Ribulose bisphosphate carboxylase large chain.